The sequence spans 304 residues: Non-specific ribonucleoside hydrolase RihC (304 aa).

Residue H233 is part of the active site.

Belongs to the IUNH family. RihC subfamily.

Its function is as follows. Hydrolyzes both purine and pyrimidine ribonucleosides with a broad-substrate specificity. This Shigella dysenteriae serotype 1 (strain Sd197) protein is Non-specific ribonucleoside hydrolase RihC.